A 248-amino-acid chain; its full sequence is UPF0651 protein YPL107W, mitochondrial (248 aa).

The transit peptide at 1 to 26 directs the protein to the mitochondrion; that stretch reads MIRNQGWSLLYRIYPVRRFTRYSRVD. In terms of domain architecture, Oxidoreductase-like spans 69 to 116; sequence KKIAGVQVPAKPQEPDNCCMSGCVNCVWEIYSEDLRDWKHRRKEAAEK.

This sequence belongs to the UPF0651 family.

The protein resides in the mitochondrion. This Saccharomyces cerevisiae (strain ATCC 204508 / S288c) (Baker's yeast) protein is UPF0651 protein YPL107W, mitochondrial.